The sequence spans 491 residues: MSESKDTTEVNQEVNEKASSQSTKKQINFKRSHFIIILIVTILVTAMIAVFATIGISHWTSGLNSDQRDEMKKVEQVYQTLDDEYYKDTSSEELGTAAIDGMVKKLDDPYSDYMTKKETKSFNEDVSGDFVGIGAEMQKKGNQIQITSPMKQSPAEKAGIQPKDVVTKVNGKSIKGQPLEAIVKKVRGKQGTKVTLTIERGGQAHDITIKRDKIHVKSVEYQKHGDVGVFTINKFQNSTSGELKSAIIKAHKDGIRKIVLDLRNNPGGLLDEAVKMANIFIDKNETVVQLEKGKHKEAIKASNDASKEAKDMDVSILVNKGSASASEVFTGAMKDYNKAKVYGSKTFGKGIVQTTREFEDGSLLKFTNMKWLTPKSHYIHGKGITPDKKIEEPAYQSLNVIPSNKTYQLGDDDKNVKTMKVGLNVLGYHINNHSTEFDSELEDALKSFQKKNNLDVNGTFNKSTNEKFTQQLVEKANKEDTVLNELLKKLN.

The tract at residues 1-22 is disordered; that stretch reads MSESKDTTEVNQEVNEKASSQS. Positions 9–22 are enriched in polar residues; it reads EVNQEVNEKASSQS. A helical membrane pass occupies residues 34-54; that stretch reads FIIILIVTILVTAMIAVFATI. Residues 119 to 201 enclose the PDZ domain; sequence TKSFNEDVSG…TKVTLTIERG (83 aa). Active-site charge relay system residues include Ser324, Asp335, and Lys349.

It belongs to the peptidase S41A family.

It is found in the cell membrane. This Staphylococcus saprophyticus subsp. saprophyticus (strain ATCC 15305 / DSM 20229 / NCIMB 8711 / NCTC 7292 / S-41) protein is Probable CtpA-like serine protease.